Reading from the N-terminus, the 172-residue chain is Large ribosomal subunit protein bL17m (172 aa).

A mitochondrion-targeting transit peptide spans 1-8 (MRLSFAAA).

This sequence belongs to the bacterial ribosomal protein bL17 family. As to quaternary structure, component of the mitochondrial ribosome large subunit (39S) which comprises a 16S rRNA and about 50 distinct proteins.

Its subcellular location is the mitochondrion. In Bos taurus (Bovine), this protein is Large ribosomal subunit protein bL17m (MRPL17).